The primary structure comprises 426 residues: Probable imidazolonepropionase (426 aa).

4-imidazolone-5-propanoate-binding residues include Y159 and H192. Y159 contacts N-formimidoyl-L-glutamate. Position 260 (H260) interacts with Fe(3+). Position 260 (H260) interacts with Zn(2+). 4-imidazolone-5-propanoate is bound at residue E263. D334 is a Fe(3+) binding site. Residue D334 participates in Zn(2+) binding. N336 serves as a coordination point for N-formimidoyl-L-glutamate.

This sequence belongs to the metallo-dependent hydrolases superfamily. HutI family. It depends on Zn(2+) as a cofactor. Fe(3+) is required as a cofactor.

It catalyses the reaction 4-imidazolone-5-propanoate + H2O = N-formimidoyl-L-glutamate. Its pathway is amino-acid degradation; L-histidine degradation into L-glutamate; N-formimidoyl-L-glutamate from L-histidine: step 3/3. This Mus musculus (Mouse) protein is Probable imidazolonepropionase (Amdhd1).